A 542-amino-acid chain; its full sequence is Apolipoprotein N-acyltransferase (542 aa).

6 consecutive transmembrane segments (helical) span residues 26 to 46 (ASVI…LSLV), 54 to 74 (IWCL…SWML), 89 to 109 (LLIS…VLCF), 113 to 133 (YWGA…VRYY), 163 to 183 (WAGQ…VLVF), and 187 to 207 (FSYG…GTYY). The CN hydrolase domain maps to 220 to 499 (LRVAIVQPGY…PDVLQVSVPV (280 aa)). The active-site Proton acceptor is the E264. The active site involves K349. C404 serves as the catalytic Nucleophile. A helical transmembrane segment spans residues 509–529 (FGDAPLLFVAVSSVLGVVGYF).

It belongs to the CN hydrolase family. Apolipoprotein N-acyltransferase subfamily.

The protein localises to the cell inner membrane. It catalyses the reaction N-terminal S-1,2-diacyl-sn-glyceryl-L-cysteinyl-[lipoprotein] + a glycerophospholipid = N-acyl-S-1,2-diacyl-sn-glyceryl-L-cysteinyl-[lipoprotein] + a 2-acyl-sn-glycero-3-phospholipid + H(+). Its pathway is protein modification; lipoprotein biosynthesis (N-acyl transfer). Catalyzes the phospholipid dependent N-acylation of the N-terminal cysteine of apolipoprotein, the last step in lipoprotein maturation. The polypeptide is Apolipoprotein N-acyltransferase (Chlamydia muridarum (strain MoPn / Nigg)).